A 258-amino-acid polypeptide reads, in one-letter code: Tritrans,polycis-undecaprenyl-diphosphate synthase (geranylgeranyl-diphosphate specific) (258 aa).

Residue Asp-37 is part of the active site. Asp-37 contributes to the Mg(2+) binding site. Substrate is bound by residues Gly-38–Arg-41, His-54, and Ser-82–Glu-84. The active-site Proton acceptor is the Asn-85. Residues Phe-86, Arg-88, Arg-207, and Arg-213 to Ser-215 contribute to the substrate site. Position 226 (Glu-226) interacts with Mg(2+).

Belongs to the UPP synthase family. As to quaternary structure, homodimer. Requires Mg(2+) as cofactor.

It catalyses the reaction geranylgeranyl diphosphate + 7 isopentenyl diphosphate = tri-trans,hepta-cis-undecaprenyl diphosphate + 7 diphosphate. Functionally, catalyzes the sequential condensation of isopentenyl diphosphate (IPP) with geranylgeranyl diphosphate (GGPP) to yield (2Z,6Z,10Z,14Z,18Z,22Z,26Z,30E,34E,38E)-undecaprenyl diphosphate (tritrans,heptacis-UPP). It is probably the precursor of glycosyl carrier lipids. The polypeptide is Tritrans,polycis-undecaprenyl-diphosphate synthase (geranylgeranyl-diphosphate specific) (Thermoplasma acidophilum (strain ATCC 25905 / DSM 1728 / JCM 9062 / NBRC 15155 / AMRC-C165)).